The chain runs to 119 residues: Small ribosomal subunit protein uS13m (119 aa).

It belongs to the universal ribosomal protein uS13 family. As to quaternary structure, component of the mitochondrial small ribosomal subunit (mt-SSU). Mature N.crassa 74S mitochondrial ribosomes consist of a small (37S) and a large (54S) subunit. The 37S small subunit contains a 16S ribosomal RNA (16S mt-rRNA) and 32 different proteins. The 54S large subunit contains a 23S rRNA (23S mt-rRNA) and 42 different proteins.

It is found in the mitochondrion. Component of the mitochondrial ribosome (mitoribosome), a dedicated translation machinery responsible for the synthesis of mitochondrial genome-encoded proteins, including at least some of the essential transmembrane subunits of the mitochondrial respiratory chain. The mitoribosomes are attached to the mitochondrial inner membrane and translation products are cotranslationally integrated into the membrane. The chain is Small ribosomal subunit protein uS13m (sws2) from Neurospora crassa (strain ATCC 24698 / 74-OR23-1A / CBS 708.71 / DSM 1257 / FGSC 987).